Consider the following 537-residue polypeptide: Lysosomal cobalamin transport escort protein LMBD1 (537 aa).

Residues 1–7 (MATGSTE) lie on the Extracellular side of the membrane. The helical transmembrane segment at 8–28 (LLIGWCIFGVLLLAILAFCWV) threads the bilayer. Residues 29–47 (YVRKYQSHQESEVISTITA) are Cytoplasmic-facing. A helical transmembrane segment spans residues 48–68 (ISSLAIALITSALLPVDIFLV). Over 69–98 (SFMKNHNGTFKDWAENNDTRIQIENTVLIG) the chain is Extracellular. 2 N-linked (GlcNAc...) asparagine glycosylation sites follow: asparagine 75 and asparagine 85. The helical transmembrane segment at 99–119 (YYTLYSIILFCVFLWIPFVYF) threads the bilayer. Over 120–142 (YYEEKDDTDGSHCSQIGSALKYT) the chain is Cytoplasmic. A helical membrane pass occupies residues 143-163 (SGFVLVCSCLLLIGAFAPLDI). Over 164 to 186 (PSKANATELDKIKLLFQNLGSSN) the chain is Extracellular. Asparagine 168 is a glycosylation site (N-linked (GlcNAc...) asparagine). A helical membrane pass occupies residues 187-207 (GLAALSFSISSLTLIGMLAAI). Over 208–303 (TYTAYGMSAL…KCCLVMRPFK (96 aa)) the chain is Cytoplasmic. A helical transmembrane segment spans residues 304–324 (IVWGILFILVALLFIVSLFLS). The Extracellular portion of the chain corresponds to 325–362 (NLDKALHSAGINTGFIIFGTNLTNPLNILLPVLQTVFP). Residue asparagine 345 is glycosylated (N-linked (GlcNAc...) asparagine). Residues 363 to 383 (LDYIFITTITMYFIFTSMAGI) traverse the membrane as a helical segment. Over 384-406 (RNMGIWFFWIRLYKIRRRRTRPQ) the chain is Cytoplasmic. A helical transmembrane segment spans residues 407–427 (ALLFLCMILLLIVLHTSYMIY). Topologically, residues 428–484 (SLAPQYVMYGSQKYLWENNSTQETAIGNSSALVLKDCDASAPEDQCTVTRTYLFLHK) are extracellular. 3 N-linked (GlcNAc...) asparagine glycosylation sites follow: asparagine 445, asparagine 446, and asparagine 455. Residues 485–505 (FWFFSSIYYFGNWAFIVVFVI) form a helical membrane-spanning segment. Topologically, residues 506-537 (GLIVSCCKGKKSVIEGEVEDDDSDLSDDEDHP) are cytoplasmic.

Belongs to the LIMR family. LMBRD1 subfamily.

It is found in the endoplasmic reticulum membrane. It localises to the lysosome membrane. The protein resides in the cell membrane. In terms of biological role, lysosomal membrane chaperone required to export cobalamin (vitamin B12) from the lysosome to the cytosol, allowing its conversion to cofactors. Targets ABCD4 transporter from the endoplasmic reticulum to the lysosome. Then forms a complex with lysosomal ABCD4 and cytoplasmic MMACHC to transport cobalamin across the lysosomal membrane. May play a role in mediating and regulating the internalization of the insulin receptor. This chain is Lysosomal cobalamin transport escort protein LMBD1 (lmbrd1), found in Xenopus laevis (African clawed frog).